We begin with the raw amino-acid sequence, 339 residues long: Heat-inducible transcription repressor HrcA (339 aa).

This sequence belongs to the HrcA family.

In terms of biological role, negative regulator of class I heat shock genes (grpE-dnaK-dnaJ and groELS operons). Prevents heat-shock induction of these operons. This is Heat-inducible transcription repressor HrcA from Thiobacillus denitrificans (strain ATCC 25259 / T1).